The sequence spans 93 residues: UPF0473 protein BH1270 (93 aa).

It belongs to the UPF0473 family.

This Halalkalibacterium halodurans (strain ATCC BAA-125 / DSM 18197 / FERM 7344 / JCM 9153 / C-125) (Bacillus halodurans) protein is UPF0473 protein BH1270.